A 349-amino-acid chain; its full sequence is Probable FBD-associated F-box protein At5g38565 (349 aa).

Residues 1 to 47 (MDIFNGLPDDVLVKILSFVPTKVAVSTSILSKRWEFLWMWLPRLDFG) enclose the F-box domain. The region spanning 263-311 (CWNQPISVPECLLESLQIFNLSHYFGKQQDLDFVVYILKNACHLKTATI) is the FBD domain.

The protein is Probable FBD-associated F-box protein At5g38565 of Arabidopsis thaliana (Mouse-ear cress).